Consider the following 185-residue polypeptide: Ribulose bisphosphate carboxylase small subunit, chloroplastic 2 (185 aa).

The transit peptide at 1-45 directs the protein to the chloroplast; it reads MAAVIAKSSVSAAVARPARSSVRPMAALKPAVKAAPVAAPAQANQ. At M46 the chain carries N-methylmethionine.

Belongs to the RuBisCO small chain family. As to quaternary structure, heterohexadecamer of 8 large and 8 small subunits.

The protein resides in the plastid. It is found in the chloroplast. It localises to the chloroplast stroma. Functionally, ruBisCO catalyzes two reactions: the carboxylation of D-ribulose 1,5-bisphosphate, the primary event in carbon dioxide fixation, as well as the oxidative fragmentation of the pentose substrate. Both reactions occur simultaneously and in competition at the same active site. Although the small subunit is not catalytic it is essential for maximal activity. The sequence is that of Ribulose bisphosphate carboxylase small subunit, chloroplastic 2 from Chlamydomonas reinhardtii (Chlamydomonas smithii).